A 332-amino-acid polypeptide reads, in one-letter code: 2,3-diketo-L-gulonate reductase (332 aa).

Histidine 44 functions as the Proton donor in the catalytic mechanism. NAD(+)-binding positions include 168-174, 224-225, and 304-306; these read ITMVDMS, WK, and GHE.

It belongs to the LDH2/MDH2 oxidoreductase family. DlgD subfamily. Homodimer.

The protein resides in the cytoplasm. The enzyme catalyses 3-dehydro-L-gulonate + NAD(+) = 2,3-dioxo-L-gulonate + NADH + H(+). It catalyses the reaction 3-dehydro-L-gulonate + NADP(+) = 2,3-dioxo-L-gulonate + NADPH + H(+). Catalyzes the reduction of 2,3-diketo-L-gulonate in the presence of NADH, to form 3-keto-L-gulonate. The chain is 2,3-diketo-L-gulonate reductase from Escherichia coli O81 (strain ED1a).